Reading from the N-terminus, the 304-residue chain is Phosphoribosylaminoimidazole-succinocarboxamide synthase (304 aa).

This sequence belongs to the SAICAR synthetase family.

It catalyses the reaction 5-amino-1-(5-phospho-D-ribosyl)imidazole-4-carboxylate + L-aspartate + ATP = (2S)-2-[5-amino-1-(5-phospho-beta-D-ribosyl)imidazole-4-carboxamido]succinate + ADP + phosphate + 2 H(+). It participates in purine metabolism; IMP biosynthesis via de novo pathway; 5-amino-1-(5-phospho-D-ribosyl)imidazole-4-carboxamide from 5-amino-1-(5-phospho-D-ribosyl)imidazole-4-carboxylate: step 1/2. This chain is Phosphoribosylaminoimidazole-succinocarboxamide synthase, found in Corynebacterium efficiens (strain DSM 44549 / YS-314 / AJ 12310 / JCM 11189 / NBRC 100395).